A 1020-amino-acid polypeptide reads, in one-letter code: Calcium-transporting ATPase 10, plasma membrane-type (1020 aa).

Residues 1–175 are Cytoplasmic-facing; it reads MESYLEENFG…FVWEALQDTT (175 aa). Residues 21–32 form an interaction with calmodulin region; it reads ALRRWRKLCGVV. 2 consecutive transmembrane segments (helical) span residues 176 to 196 and 199 to 219; these read LIIL…MEGW and GAHD…VTAT. Residues 220–263 are Cytoplasmic-facing; it reads SDYRQSLQFKDLDKEKKKIQVQVTRNGFRQRLSIYDLLPGDVVH. Transmembrane regions (helical) follow at residues 264–284 and 352–372; these read LAIG…SLLI and GVAT…FIVL. The Cytoplasmic segment spans residues 373–400; sequence SQGLISKKYHEGLLLSWSGDDALEMLEH. A helical transmembrane segment spans residues 401 to 421; it reads FAIAVTIVVVAVPEGLPLAVT. Residue aspartate 456 is the 4-aspartylphosphate intermediate of the active site. Residues aspartate 758 and aspartate 762 each contribute to the Mg(2+) site. A helical transmembrane segment spans residues 843–863; it reads LTAVQLLWVNMIMDTLGALAL. Residues 864–887 are Cytoplasmic-facing; the sequence is ATEPPNDDLMKREPVGRTGKFITN. 2 consecutive transmembrane segments (helical) span residues 888–907 and 924–944; these read VMWR…MWYL and VVLN…NEIS. Topologically, residues 945–961 are cytoplasmic; it reads SREMEKINVLRGILKNY. 2 helical membrane passes run 962–982 and 995–1015; these read VFLG…QFLG and WIAS…IKLL. Over 1016–1020 the chain is Cytoplasmic; sequence PVGSS.

The protein belongs to the cation transport ATPase (P-type) (TC 3.A.3) family. Type IIB subfamily.

It localises to the membrane. The enzyme catalyses Ca(2+)(in) + ATP + H2O = Ca(2+)(out) + ADP + phosphate + H(+). Its activity is regulated as follows. Activated by calmodulin. This magnesium-dependent enzyme catalyzes the hydrolysis of ATP coupled with the translocation of calcium from the cytosol out of the cell, into the endoplasmic reticulum, or into organelles. The chain is Calcium-transporting ATPase 10, plasma membrane-type from Oryza sativa subsp. japonica (Rice).